A 199-amino-acid chain; its full sequence is dITP/XTP pyrophosphatase (199 aa).

A substrate-binding site is contributed by 8-13; it reads TSNKNK. Residues glutamate 40 and aspartate 68 each coordinate Mg(2+). Residue aspartate 68 is the Proton acceptor of the active site. Residues serine 69, 154-157, lysine 177, and 182-183 contribute to the substrate site; these read FGYD and HR.

This sequence belongs to the HAM1 NTPase family. As to quaternary structure, homodimer. Mg(2+) is required as a cofactor.

It catalyses the reaction XTP + H2O = XMP + diphosphate + H(+). It carries out the reaction dITP + H2O = dIMP + diphosphate + H(+). The catalysed reaction is ITP + H2O = IMP + diphosphate + H(+). Pyrophosphatase that catalyzes the hydrolysis of nucleoside triphosphates to their monophosphate derivatives, with a high preference for the non-canonical purine nucleotides XTP (xanthosine triphosphate), dITP (deoxyinosine triphosphate) and ITP. Seems to function as a house-cleaning enzyme that removes non-canonical purine nucleotides from the nucleotide pool, thus preventing their incorporation into DNA/RNA and avoiding chromosomal lesions. In Wigglesworthia glossinidia brevipalpis, this protein is dITP/XTP pyrophosphatase.